The following is a 477-amino-acid chain: PTS system MurNAc-GlcNAc-specific EIIBC component (477 aa).

The PTS EIIB type-1 domain maps to 5-87 (QQLAHHILDA…VKLSGVQLGE (83 aa)). Residue cysteine 27 is the Phosphocysteine intermediate; for EIIB activity of the active site. The disordered stretch occupies residues 91–113 (HRSNTSNIKNQAQQNKREFQQKR). Positions 92–104 (RSNTSNIKNQAQQ) are enriched in polar residues. The PTS EIIC type-1 domain occupies 123–477 (KSIANIFIPL…EMRNLNKLGD (355 aa)). A run of 10 helical transmembrane segments spans residues 128-148 (IFIPLIPAFIGAGLIGGIAAV), 167-187 (VAVLNVIKDGMLAYLAIFTGF), 192-212 (VFGATPGLGGVIGGTTLLTGI), 227-247 (LIAGQGGIIGVILAVWLLSII), 267-287 (ISLLIIGLLTIFFFMPIAGFI), 298-318 (VIGVGGIFSGFIIGAFFLPLV), 342-362 (LLPIAAMAGAGQVGAALALWV), 377-397 (ALPVGFLGIGEPLIYGVTLPL), 401-421 (FITACLGGGIGGAVIGGIGHI), and 443-463 (LGYIIGLLSAYLAGFIFTYFF).

It localises to the cell membrane. It catalyses the reaction N-acetyl-beta-D-muramate-(1-&gt;4)-N-acetyl-D-glucosamine(out) + N(pros)-phospho-L-histidyl-[protein] = 6-phospho-N-acetyl-beta-D-muramate-(1-&gt;4)-N-acetyl-D-glucosamine(in) + L-histidyl-[protein]. Its pathway is cell wall biogenesis; peptidoglycan recycling. Its function is as follows. The phosphoenolpyruvate-dependent sugar phosphotransferase system (sugar PTS), a major carbohydrate active transport system, catalyzes the phosphorylation of incoming sugar substrates concomitantly with their translocation across the cell membrane. This system is involved in the uptake and phosphorylation of MurNAc-GlcNAc, the principle peptidoglycan turnover product of S.aureus, yielding cytoplasmic MurNAc 6P-GlcNAc. This chain is PTS system MurNAc-GlcNAc-specific EIIBC component, found in Staphylococcus haemolyticus (strain JCSC1435).